The sequence spans 311 residues: Malate dehydrogenase (311 aa).

NAD(+)-binding positions include 7 to 13 and Asp-34; that span reads GAAGGIG. Substrate-binding residues include Arg-81 and Arg-87. Residues Asn-94 and 117-119 each bind NAD(+); that span reads ITN. Asn-119 and Arg-153 together coordinate substrate. The active-site Proton acceptor is the His-177. Met-227 provides a ligand contact to NAD(+).

The protein belongs to the LDH/MDH superfamily. MDH type 1 family. In terms of assembly, homodimer.

It carries out the reaction (S)-malate + NAD(+) = oxaloacetate + NADH + H(+). Its function is as follows. Catalyzes the reversible oxidation of malate to oxaloacetate. The polypeptide is Malate dehydrogenase (Shewanella loihica (strain ATCC BAA-1088 / PV-4)).